A 284-amino-acid chain; its full sequence is Cell division protein DivIB (284 aa).

Residues 1–10 (MAWLRKKEQQ) show a composition bias toward basic and acidic residues. Residues 1–38 (MAWLRKKEQQSDPLTPWQQYQARQQQTPRHDRRQKPKL) are disordered. At 1-56 (MAWLRKKEQQSDPLTPWQQYQARQQQTPRHDRRQKPKLDVNLPKIQTLRRRKLVKN) the chain is on the cytoplasmic side. Residues 57–77 (LVLILLPLLLLLGVFGYFASP) form a helical membrane-spanning segment. The Extracellular segment spans residues 78–284 (LSKVGLVSVQ…YSSSEKSSND (207 aa)). Positions 79–150 (SKVGLVSVQG…NRIIIKTSEY (72 aa)) constitute a POTRA domain.

This sequence belongs to the FtsQ/DivIB family. DivIB subfamily.

It is found in the cell membrane. In terms of biological role, cell division protein that may be involved in stabilizing or promoting the assembly of the division complex. This chain is Cell division protein DivIB, found in Lacticaseibacillus rhamnosus (strain ATCC 53103 / LMG 18243 / GG) (Lactobacillus rhamnosus).